The following is a 73-amino-acid chain: Mu-conotoxin SIIIA (73 aa).

A signal peptide spans 1 to 20 (MMSKLGVLLTVCPLLFPLTA). Positions 20–40 (ALPPDGDQPADRPAERMQDDI) are disordered. Positions 21–49 (LPPDGDQPADRPAERMQDDISSDEHPLFD) are excised as a propeptide. Over residues 28-40 (PADRPAERMQDDI) the composition is skewed to basic and acidic residues. The residue at position 52 (glutamine 52) is a Pyrrolidone carboxylic acid. 3 disulfide bridges follow: cysteine 54/cysteine 64, cysteine 55/cysteine 70, and cysteine 59/cysteine 71. Cysteine 71 bears the Cysteine amide mark.

Belongs to the conotoxin M superfamily. Expressed by the venom duct.

It localises to the secreted. Its function is as follows. Mu-conotoxins block voltage-gated sodium channels (Nav). This toxin moderately blocks rNav1.1/SCN1A, rNav1.2/SCN2A, rNav1.3/SCN3A, rNav1.4/SCN4A, and mNav1.6/SCN8A. In Conus striatus (Striated cone), this protein is Mu-conotoxin SIIIA.